The following is a 452-amino-acid chain: MGFFSSLGQINVWSLLRPIIESDLEVIVIALGGYVLAKKGFLPRDAQKVISSLNVYFFTPCLVFEKVGNGLNLKMLIDLSLLPVFYVIISAASILISFLLAKLFRLTPRQRNFATACITFQNSNSLPLALVSSLATTVKDLLWDKIPDDTPDKVASRGIMYLLIFSQLGQALRWSYGYRILLSPNQPEDPLPIGNRSWSHSDVNEEEIQNLLASSANVDGVQNSVQANEGSTVQTDSSAISKNDNVQVETSNEEVGGFGAASSKISKFIVLLLDFFSPPLYSLFIALFIAVVPPLQRFFFEEGSFVEGSITSGIRMAGQVAVPMILVVLGASLATDISKTEPTQEVRKNNDTRVIIVCLLGRMVVVPLALLPAFSLLSYFSEISTVDDPVFVVVIFLLVGSPTAIQLTQICQLNGVFERECAKVLWWSYAVFTPPNSLLLAFASLLVVKWTK.

The next 7 helical transmembrane spans lie at 18–38 (PIIE…VLAK), 81–101 (LLPV…FLLA), 269–289 (IVLL…ALFI), 317–337 (AGQV…ATDI), 354–374 (VIIV…LPAF), 390–410 (VFVV…LTQI), and 428–448 (SYAV…LLVV).

This sequence belongs to the auxin efflux carrier (TC 2.A.69) family.

The protein resides in the membrane. This is an uncharacterized protein from Schizosaccharomyces pombe (strain 972 / ATCC 24843) (Fission yeast).